A 364-amino-acid chain; its full sequence is Uroporphyrinogen decarboxylase (364 aa).

Residues 49-53, Asp-98, Tyr-173, Ser-228, and His-341 contribute to the substrate site; that span reads RQAGR.

It belongs to the uroporphyrinogen decarboxylase family. Homodimer.

Its subcellular location is the cytoplasm. The enzyme catalyses uroporphyrinogen III + 4 H(+) = coproporphyrinogen III + 4 CO2. Its pathway is porphyrin-containing compound metabolism; protoporphyrin-IX biosynthesis; coproporphyrinogen-III from 5-aminolevulinate: step 4/4. In terms of biological role, catalyzes the decarboxylation of four acetate groups of uroporphyrinogen-III to yield coproporphyrinogen-III. The sequence is that of Uroporphyrinogen decarboxylase from Protochlamydia amoebophila (strain UWE25).